The chain runs to 959 residues: Transcription factor 1 (959 aa).

C2H2-type zinc fingers lie at residues 2 to 24 and 30 to 52; these read VFCT…ILTH and FKCF…YTVH. Positions 79–105 form a DNA-binding region, zn(2)-C6 fungal-type; that stretch reads CSNCAKTKTKCDKKFPCSRCASRNLRC. The interval 154-226 is disordered; the sequence is PTGHVEESSK…SFPGFDDYNQ (73 aa). Residues 163 to 178 are compositionally biased toward low complexity; sequence KSSSPSGSPTSISHNS.

It is found in the nucleus. Its function is as follows. Elsinochromes biosynthesis cluster-specific transcription factor that positively regulates the expression of cluster genes including RDT1, PKS1, PRF1 and HP1, and subsequent elsinochromes production. In Elsinoe fawcettii (Citrus scab fungus), this protein is Transcription factor 1.